A 602-amino-acid polypeptide reads, in one-letter code: Toxin YwqJ (602 aa).

Residues 1-235 (MSKVFESKSL…TTYIDAKTQQ (235 aa)) form the LXG domain. Coiled coils occupy residues 6–41 (ESKSLIEEAKSRKKQYETLEEQLNTLKKAFQGVADL) and 227–251 (TYIDAKTQQAEARRLQEKAEEEANK).

The protein in the N-terminal section; belongs to the LXG family. Probably interacts with cognate immunity protein YwqK but not with non-cognate immunity proteins. The interaction inhibits the toxic activity of YwqJ.

The protein resides in the secreted. Functionally, toxic component of one of 6 LXG toxin-immunity modules in this strain. They promote kin selection, mediate competition in biofilms, and drive spatial segregation of different strains, indicating that LXG toxins may help avoid warfare between strains in biofilms. Mediates intercellular competition during biofilm formation; disruption of the operon disadvantages the bacteria, but overexpression of the cognate immunity protein restores growth in competition with wild-type. Overexpression alone in situ causes growth arrest but not cell lysis; no effect is seen on DNA or rRNA. Co-overexpression with cognate immunity protein YwqK does not cause growth arrest. The toxic effect is dependent on the epsA and tapA operons which are required for biofilm formation. Its toxic effects are probably neutralized by its cognate immunity protein YwqK, but not by immunity proteins specific to other toxins with the LXG domain. May have deaminase activity. The sequence is that of Toxin YwqJ (ywqJ) from Bacillus subtilis (strain 168).